We begin with the raw amino-acid sequence, 492 residues long: N-succinylglutamate 5-semialdehyde dehydrogenase (492 aa).

220–225 (GSANTG) is a binding site for NAD(+). Residues E243 and C277 contribute to the active site.

The protein belongs to the aldehyde dehydrogenase family. AstD subfamily.

The catalysed reaction is N-succinyl-L-glutamate 5-semialdehyde + NAD(+) + H2O = N-succinyl-L-glutamate + NADH + 2 H(+). It participates in amino-acid degradation; L-arginine degradation via AST pathway; L-glutamate and succinate from L-arginine: step 4/5. Its function is as follows. Catalyzes the NAD-dependent reduction of succinylglutamate semialdehyde into succinylglutamate. In Escherichia coli O6:H1 (strain CFT073 / ATCC 700928 / UPEC), this protein is N-succinylglutamate 5-semialdehyde dehydrogenase.